Consider the following 669-residue polypeptide: DNA polymerase epsilon subunit B (669 aa).

Positions 96–115 (QISTRNGSADNLAKKAERSD) are disordered.

It belongs to the DNA polymerase epsilon subunit B family. As to quaternary structure, heterotetramer. Consists of four subunits: POL2, DPB2, DPB3 and DPB4.

It localises to the nucleus. Its function is as follows. As accessory component of the DNA polymerase epsilon (DNA polymerase II) participates in chromosomal DNA replication. In Debaryomyces hansenii (strain ATCC 36239 / CBS 767 / BCRC 21394 / JCM 1990 / NBRC 0083 / IGC 2968) (Yeast), this protein is DNA polymerase epsilon subunit B (DPB2).